We begin with the raw amino-acid sequence, 541 residues long: DNA ligase 1 (541 aa).

Residue E234 participates in ATP binding. K236 (N6-AMP-lysine intermediate) is an active-site residue. R241, R256, E286, F325, R398, and K404 together coordinate ATP.

This sequence belongs to the ATP-dependent DNA ligase family. Mg(2+) serves as cofactor.

The enzyme catalyses ATP + (deoxyribonucleotide)n-3'-hydroxyl + 5'-phospho-(deoxyribonucleotide)m = (deoxyribonucleotide)n+m + AMP + diphosphate.. In terms of biological role, DNA ligase that seals nicks in double-stranded DNA during DNA replication, DNA recombination and DNA repair. This Korarchaeum cryptofilum (strain OPF8) protein is DNA ligase 1.